The sequence spans 68 residues: Guanine nucleotide-binding protein G(I)/G(S)/G(O) subunit gamma-10 (68 aa).

N-acetylserine is present on Ser-2. Cysteine methyl ester is present on Cys-65. Cys-65 carries the S-geranylgeranyl cysteine lipid modification. A propeptide spans 66-68 (removed in mature form); it reads ALL.

It belongs to the G protein gamma family. G proteins are composed of 3 units, alpha, beta and gamma. Abundantly and ubiquitously expressed.

The protein resides in the cell membrane. Guanine nucleotide-binding proteins (G proteins) are involved as a modulator or transducer in various transmembrane signaling systems. The beta and gamma chains are required for the GTPase activity, for replacement of GDP by GTP, and for G protein-effector interaction. Interacts with beta-1 and beta-2, but not with beta-3. The sequence is that of Guanine nucleotide-binding protein G(I)/G(S)/G(O) subunit gamma-10 (GNG10) from Homo sapiens (Human).